The sequence spans 478 residues: ATP synthase subunit beta (478 aa).

160 to 167 (GGAGVGKT) is a binding site for ATP.

Belongs to the ATPase alpha/beta chains family. F-type ATPases have 2 components, CF(1) - the catalytic core - and CF(0) - the membrane proton channel. CF(1) has five subunits: alpha(3), beta(3), gamma(1), delta(1), epsilon(1). CF(0) has three main subunits: a(1), b(2) and c(9-12). The alpha and beta chains form an alternating ring which encloses part of the gamma chain. CF(1) is attached to CF(0) by a central stalk formed by the gamma and epsilon chains, while a peripheral stalk is formed by the delta and b chains.

The protein localises to the cell inner membrane. It carries out the reaction ATP + H2O + 4 H(+)(in) = ADP + phosphate + 5 H(+)(out). Functionally, produces ATP from ADP in the presence of a proton gradient across the membrane. The catalytic sites are hosted primarily by the beta subunits. The polypeptide is ATP synthase subunit beta (Orientia tsutsugamushi (strain Ikeda) (Rickettsia tsutsugamushi)).